The sequence spans 264 residues: Indole-3-glycerol phosphate synthase (264 aa).

The protein belongs to the TrpC family.

It catalyses the reaction 1-(2-carboxyphenylamino)-1-deoxy-D-ribulose 5-phosphate + H(+) = (1S,2R)-1-C-(indol-3-yl)glycerol 3-phosphate + CO2 + H2O. It participates in amino-acid biosynthesis; L-tryptophan biosynthesis; L-tryptophan from chorismate: step 4/5. The protein is Indole-3-glycerol phosphate synthase of Stenotrophomonas maltophilia (strain K279a).